Consider the following 206-residue polypeptide: Shieldin complex subunit 1 (206 aa).

Residues 27–94 form a disordered region; that stretch reads SSYEASQRVS…GQLETNEEED (68 aa). Residues 32 to 55 are compositionally biased toward low complexity; sequence SQRVSQGSSNSLSSLESHPFLSSS. Polar residues predominate over residues 56-74; the sequence is TTDPDSNSLNTEQKGSWDS.

In terms of assembly, component of the shieldin complex, consisting of SHLD1, SHLD2, SHLD3 and MAD2L2/REV7. Within the complex, SHLD2 forms a scaffold which interacts with a SHLD3-MAD2L2 subcomplex via its N-terminus, and with SHLD1 via its C-terminus. Interacts with ASTE1.

It localises to the chromosome. Functionally, component of the shieldin complex, which plays an important role in repair of DNA double-stranded breaks (DSBs). During G1 and S phase of the cell cycle, the complex functions downstream of TP53BP1 to promote non-homologous end joining (NHEJ) and suppress DNA end resection. Mediates various NHEJ-dependent processes including immunoglobulin class-switch recombination, and fusion of unprotected telomeres. This chain is Shieldin complex subunit 1, found in Mus musculus (Mouse).